The following is a 387-amino-acid chain: Chorismate synthase (387 aa).

NADP(+)-binding residues include arginine 39 and arginine 45. The tract at residues 92 to 113 (PVEEGSEEKRRVSRPRPGHADL) is disordered. FMN is bound by residues 130 to 132 (RSS), 250 to 251 (QA), glycine 295, 310 to 314 (KPIPT), and arginine 336.

The protein belongs to the chorismate synthase family. Homotetramer. The cofactor is FMNH2.

The catalysed reaction is 5-O-(1-carboxyvinyl)-3-phosphoshikimate = chorismate + phosphate. It functions in the pathway metabolic intermediate biosynthesis; chorismate biosynthesis; chorismate from D-erythrose 4-phosphate and phosphoenolpyruvate: step 7/7. Functionally, catalyzes the anti-1,4-elimination of the C-3 phosphate and the C-6 proR hydrogen from 5-enolpyruvylshikimate-3-phosphate (EPSP) to yield chorismate, which is the branch point compound that serves as the starting substrate for the three terminal pathways of aromatic amino acid biosynthesis. This reaction introduces a second double bond into the aromatic ring system. The polypeptide is Chorismate synthase (Brevibacillus brevis (strain 47 / JCM 6285 / NBRC 100599)).